The sequence spans 226 residues: Beta-casein (226 aa).

A signal peptide spans 1-15 (MKVLILACLVALALA). At T18 the chain carries Phosphothreonine; in form 5-P. A Phosphoserine; in form 4-P and form 5-P modification is found at S21. S23 is modified (phosphoserine; in form 3-P, form 4-P and form 5-P). Phosphoserine; in form 1-P, form 2-P, form 3-P, form 4-P and form 5-P occurs at positions 24 and 25.

Belongs to the beta-casein family. Form 1-P is phosphorylated once; half of the molecules are phosphorylated on Ser-24, half on Ser-25. In terms of tissue distribution, mammary gland specific. Secreted in milk.

The protein localises to the secreted. Its function is as follows. Important role in determination of the surface properties of the casein micelles. The chain is Beta-casein (CSN2) from Homo sapiens (Human).